Here is a 501-residue protein sequence, read N- to C-terminus: Glycosyltransferase family 92 protein F13G3.3 (501 aa).

Residues 10–30 (LSVVLLFSFLFFVTAVLLQFI) traverse the membrane as a helical segment. The 289-residue stretch at 151-439 (KPVVMCISPL…ISDCYKQSYY (289 aa)) folds into the GT92 domain.

The protein belongs to the glycosyltransferase 92 family.

Its subcellular location is the membrane. The chain is Glycosyltransferase family 92 protein F13G3.3 from Caenorhabditis elegans.